We begin with the raw amino-acid sequence, 90 residues long: MNIKPLADRVLILPAPAEEKTIGGIIIPDTAKEKPLKGEVVAVGHGTKDEEMVLKAGDTVLYGKYAGTELEVEGTKYLIMRQSDVLAVLG.

It belongs to the GroES chaperonin family. In terms of assembly, heptamer of 7 subunits arranged in a ring. Interacts with the chaperonin GroEL.

The protein localises to the cytoplasm. In terms of biological role, together with the chaperonin GroEL, plays an essential role in assisting protein folding. The GroEL-GroES system forms a nano-cage that allows encapsulation of the non-native substrate proteins and provides a physical environment optimized to promote and accelerate protein folding. GroES binds to the apical surface of the GroEL ring, thereby capping the opening of the GroEL channel. The protein is Co-chaperonin GroES of Bacteroides fragilis (strain ATCC 25285 / DSM 2151 / CCUG 4856 / JCM 11019 / LMG 10263 / NCTC 9343 / Onslow / VPI 2553 / EN-2).